A 124-amino-acid polypeptide reads, in one-letter code: Large ribosomal subunit protein bL12 (124 aa).

The protein belongs to the bacterial ribosomal protein bL12 family. In terms of assembly, homodimer. Part of the ribosomal stalk of the 50S ribosomal subunit. Forms a multimeric L10(L12)X complex, where L10 forms an elongated spine to which 2 to 4 L12 dimers bind in a sequential fashion. Binds GTP-bound translation factors.

Forms part of the ribosomal stalk which helps the ribosome interact with GTP-bound translation factors. Is thus essential for accurate translation. This is Large ribosomal subunit protein bL12 from Nitrosomonas europaea (strain ATCC 19718 / CIP 103999 / KCTC 2705 / NBRC 14298).